The sequence spans 304 residues: Acetyl-coenzyme A carboxylase carboxyl transferase subunit beta (304 aa).

Positions 25-294 (LWIKCPETGE…KAVKRDTATE (270 aa)) constitute a CoA carboxyltransferase N-terminal domain.

Belongs to the AccD/PCCB family. As to quaternary structure, acetyl-CoA carboxylase is a heterohexamer composed of biotin carboxyl carrier protein (AccB), biotin carboxylase (AccC) and two subunits each of ACCase subunit alpha (AccA) and ACCase subunit beta (AccD).

It localises to the cytoplasm. The catalysed reaction is N(6)-carboxybiotinyl-L-lysyl-[protein] + acetyl-CoA = N(6)-biotinyl-L-lysyl-[protein] + malonyl-CoA. Its pathway is lipid metabolism; malonyl-CoA biosynthesis; malonyl-CoA from acetyl-CoA: step 1/1. Functionally, component of the acetyl coenzyme A carboxylase (ACC) complex. Biotin carboxylase (BC) catalyzes the carboxylation of biotin on its carrier protein (BCCP) and then the CO(2) group is transferred by the transcarboxylase to acetyl-CoA to form malonyl-CoA. The sequence is that of Acetyl-coenzyme A carboxylase carboxyl transferase subunit beta from Rhizobium meliloti (strain 1021) (Ensifer meliloti).